The chain runs to 197 residues: Glycerol-3-phosphate acyltransferase (197 aa).

A run of 4 helical transmembrane segments spans residues Leu-5–Ile-25, Leu-70–Gly-90, Val-111–Leu-131, and Ile-153–Phe-173.

This sequence belongs to the PlsY family. In terms of assembly, probably interacts with PlsX.

It localises to the cell membrane. It carries out the reaction an acyl phosphate + sn-glycerol 3-phosphate = a 1-acyl-sn-glycero-3-phosphate + phosphate. It participates in lipid metabolism; phospholipid metabolism. Functionally, catalyzes the transfer of an acyl group from acyl-phosphate (acyl-PO(4)) to glycerol-3-phosphate (G3P) to form lysophosphatidic acid (LPA). This enzyme utilizes acyl-phosphate as fatty acyl donor, but not acyl-CoA or acyl-ACP. The sequence is that of Glycerol-3-phosphate acyltransferase from Geobacillus sp. (strain WCH70).